The chain runs to 211 residues: Endoplasmic reticulum vesicle protein 25 (211 aa).

Residues 1–19 (MKSIVSVLTLLLLINAVAA) form the signal peptide. Residues 20–180 (LRFVLPAKDK…TNESTNRRVK (161 aa)) lie on the Lumenal side of the membrane. The region spanning 33-121 (PFCVRDFVKN…TKEIDLSVAI (89 aa)) is the GOLD domain. A helical membrane pass occupies residues 181-201 (FFSVGITLALIALGVWQIIYL). Topologically, residues 202–211 (RSYFRSKHII) are cytoplasmic.

The protein belongs to the EMP24/GP25L family.

Its subcellular location is the endoplasmic reticulum membrane. The protein resides in the golgi apparatus membrane. Its function is as follows. Constituent of COPII-coated endoplasmic reticulum-derived transport vesicles. Required for efficient transport of a subset of secretory proteins to the Golgi. Facilitates retrograde transport from the Golgi to the endoplasmic reticulum. This is Endoplasmic reticulum vesicle protein 25 (ERV25) from Yarrowia lipolytica (strain CLIB 122 / E 150) (Yeast).